We begin with the raw amino-acid sequence, 322 residues long: D-alanine--D-alanine ligase (322 aa).

One can recognise an ATP-grasp domain in the interval 108–311; that stretch reads KEFYYNAELP…FPSLLDTLIE (204 aa). 136-192 is a binding site for ATP; that stretch reads IEDLGLPLVVKPACAGSSIGISLAHTEEELLAGINHARDCSAGAIMVEQFIKGRELT. Aspartate 265, glutamate 278, and asparagine 280 together coordinate Mg(2+).

This sequence belongs to the D-alanine--D-alanine ligase family. It depends on Mg(2+) as a cofactor. The cofactor is Mn(2+).

The protein resides in the cytoplasm. The catalysed reaction is 2 D-alanine + ATP = D-alanyl-D-alanine + ADP + phosphate + H(+). It functions in the pathway cell wall biogenesis; peptidoglycan biosynthesis. Functionally, cell wall formation. The protein is D-alanine--D-alanine ligase of Desulfotalea psychrophila (strain LSv54 / DSM 12343).